A 133-amino-acid chain; its full sequence is ATP synthase epsilon chain (133 aa).

Belongs to the ATPase epsilon chain family. As to quaternary structure, F-type ATPases have 2 components, CF(1) - the catalytic core - and CF(0) - the membrane proton channel. CF(1) has five subunits: alpha(3), beta(3), gamma(1), delta(1), epsilon(1). CF(0) has three main subunits: a, b and c.

Its subcellular location is the cell membrane. Functionally, produces ATP from ADP in the presence of a proton gradient across the membrane. The polypeptide is ATP synthase epsilon chain (Clostridium botulinum (strain ATCC 19397 / Type A)).